A 374-amino-acid polypeptide reads, in one-letter code: Chaperone protein DnaJ (374 aa).

The J domain maps to 4-69; the sequence is SYYEILEITQ…EKRAIYDRYG (66 aa). Residues 136–213 form a CR-type zinc finger; that stretch reads GCKKNIDFTY…CKGLGYNESK (78 aa). Zn(2+) contacts are provided by C149, C152, C165, C168, C187, C190, C201, and C204. CXXCXGXG motif repeat units lie at residues 149–156, 165–172, 187–194, and 201–208; these read CKTCNGTG, CPKCQGRG, CPDCQGSG, and CSDCKGLG.

This sequence belongs to the DnaJ family. As to quaternary structure, homodimer. It depends on Zn(2+) as a cofactor.

The protein localises to the cytoplasm. In terms of biological role, participates actively in the response to hyperosmotic and heat shock by preventing the aggregation of stress-denatured proteins and by disaggregating proteins, also in an autonomous, DnaK-independent fashion. Unfolded proteins bind initially to DnaJ; upon interaction with the DnaJ-bound protein, DnaK hydrolyzes its bound ATP, resulting in the formation of a stable complex. GrpE releases ADP from DnaK; ATP binding to DnaK triggers the release of the substrate protein, thus completing the reaction cycle. Several rounds of ATP-dependent interactions between DnaJ, DnaK and GrpE are required for fully efficient folding. Also involved, together with DnaK and GrpE, in the DNA replication of plasmids through activation of initiation proteins. The polypeptide is Chaperone protein DnaJ (Campylobacter jejuni subsp. jejuni serotype O:6 (strain 81116 / NCTC 11828)).